Reading from the N-terminus, the 206-residue chain is Pyridoxine/pyridoxamine 5'-phosphate oxidase (206 aa).

Residues 53 to 58 (RMVLLK), 68 to 69 (YT), K75, and Q97 contribute to the FMN site. A substrate-binding site is contributed by K58. 3 residues coordinate substrate: Y115, R119, and S123. Residues 132–133 (QS) and W177 each bind FMN. 183–185 (RLH) is a substrate binding site. R187 is an FMN binding site.

It belongs to the pyridoxamine 5'-phosphate oxidase family. In terms of assembly, homodimer. The cofactor is FMN.

The enzyme catalyses pyridoxamine 5'-phosphate + O2 + H2O = pyridoxal 5'-phosphate + H2O2 + NH4(+). It carries out the reaction pyridoxine 5'-phosphate + O2 = pyridoxal 5'-phosphate + H2O2. The protein operates within cofactor metabolism; pyridoxal 5'-phosphate salvage; pyridoxal 5'-phosphate from pyridoxamine 5'-phosphate: step 1/1. Its pathway is cofactor metabolism; pyridoxal 5'-phosphate salvage; pyridoxal 5'-phosphate from pyridoxine 5'-phosphate: step 1/1. Functionally, catalyzes the oxidation of either pyridoxine 5'-phosphate (PNP) or pyridoxamine 5'-phosphate (PMP) into pyridoxal 5'-phosphate (PLP). The sequence is that of Pyridoxine/pyridoxamine 5'-phosphate oxidase from Rhizobium johnstonii (strain DSM 114642 / LMG 32736 / 3841) (Rhizobium leguminosarum bv. viciae).